The primary structure comprises 235 residues: MELVKRGFLRACKNHSYLSFELIDDILAPLCANHKTTKPGSKEAIRALVAEINDTISDLGQLLVFIKYPVKAEEYLVYAKTDATPDSVANTGLTAEECQYFSKLLDKIASEEDCHIAWNDAYNDIVLQASSKPLKKSRMQELLQKWIQMGYFMEVTDRIYLGPRSLVELSFYLSSNHADNIKNCTLCKCLVLWDIRCGSCNIQYHRGCIQTYLQRRDICPSCGNLWTTPIRRSIG.

An RING-type; atypical zinc finger spans residues 181-225 (IKNCTLCKCLVLWDIRCGSCNIQYHRGCIQTYLQRRDICPSCGNL). A Phosphothreonine modification is found at Thr-185.

The protein belongs to the NSE1 family. As to quaternary structure, component of the Smc5-Smc6 complex which consists at least of Smc5, Smc6, Nse1, Nse2, Nse4 and MAGE. Nse1, Nse4 and MAGE probably form a subcomplex that bridges the head domains of the Smc5-Smc6 heterodimer. Interacts with MAGE and Nse4.

It localises to the nucleus. It catalyses the reaction S-ubiquitinyl-[E2 ubiquitin-conjugating enzyme]-L-cysteine + [acceptor protein]-L-lysine = [E2 ubiquitin-conjugating enzyme]-L-cysteine + N(6)-ubiquitinyl-[acceptor protein]-L-lysine.. In terms of biological role, component of the SMC5-SMC6 complex, a complex involved in repair of DNA double-strand breaks by homologous recombination. The complex may promote sister chromatid homologous recombination by recruiting the SMC1-SMC3 cohesin complex to double-strand breaks. This Drosophila melanogaster (Fruit fly) protein is Non-structural maintenance of chromosomes element 1 homolog.